Consider the following 292-residue polypeptide: uncharacterized protein (292 aa).

Residues 13–35 (LFILFIIVVCIYLLPRVAINAFY) form a helical membrane-spanning segment.

This sequence belongs to the serine esterase family.

It localises to the membrane. This is an uncharacterized protein from Salmonella typhimurium (strain LT2 / SGSC1412 / ATCC 700720).